Here is a 181-residue protein sequence, read N- to C-terminus: uncharacterized protein (181 aa).

A disordered region spans residues 162 to 181 (QARGPAGTRTPQRRCSSHEA).

This is an uncharacterized protein from Homo sapiens (Human).